A 534-amino-acid chain; its full sequence is Putative ammonium transporter 1 (534 aa).

The next 11 helical transmembrane spans lie at 31-51, 69-89, 115-135, 139-159, 184-204, 223-243, 263-283, 291-311, 318-338, 346-366, and 401-421; these read SFFL…FAYL, LLDS…LAYG, FFFQ…AVAE, FITY…VLTH, FAGS…AAWI, ILGH…FGFL, ALAM…YLGV, WTLL…CAGC, ACIW…KLMI, LDAF…SSII, and ICAL…FWIL.

The protein belongs to the ammonia transporter channel (TC 1.A.11.2) family.

Its subcellular location is the membrane. In terms of biological role, involved in the uptake of ammonia. This is Putative ammonium transporter 1 (amt-1) from Caenorhabditis elegans.